The primary structure comprises 32 residues: Coenzyme PQQ synthesis protein A (32 aa).

A cross-link (pyrroloquinoline quinone (Glu-Tyr)) is located at residues 16-20; that stretch reads EINMY.

Belongs to the PqqA family.

The protein operates within cofactor biosynthesis; pyrroloquinoline quinone biosynthesis. Its function is as follows. Required for coenzyme pyrroloquinoline quinone (PQQ) biosynthesis. PQQ is probably formed by cross-linking a specific glutamate to a specific tyrosine residue and excising these residues from the peptide. The polypeptide is Coenzyme PQQ synthesis protein A (Dinoroseobacter shibae (strain DSM 16493 / NCIMB 14021 / DFL 12)).